A 313-amino-acid polypeptide reads, in one-letter code: Porphobilinogen deaminase (313 aa).

C242 carries the S-(dipyrrolylmethanemethyl)cysteine modification.

It belongs to the HMBS family. Monomer. The cofactor is dipyrromethane.

It carries out the reaction 4 porphobilinogen + H2O = hydroxymethylbilane + 4 NH4(+). It participates in porphyrin-containing compound metabolism; protoporphyrin-IX biosynthesis; coproporphyrinogen-III from 5-aminolevulinate: step 2/4. Its function is as follows. Tetrapolymerization of the monopyrrole PBG into the hydroxymethylbilane pre-uroporphyrinogen in several discrete steps. The sequence is that of Porphobilinogen deaminase from Pseudomonas putida (strain GB-1).